We begin with the raw amino-acid sequence, 447 residues long: tRNA-2-methylthio-N(6)-dimethylallyladenosine synthase (447 aa).

One can recognise an MTTase N-terminal domain in the interval 14-130; that stretch reads KKVYIRTFGC…LPAMIANAGQ (117 aa). Positions 23, 59, 93, 166, 170, and 173 each coordinate [4Fe-4S] cluster. The region spanning 152–382 is the Radical SAM core domain; the sequence is RSGTISAFIP…IALQGSISGE (231 aa). One can recognise a TRAM domain in the interval 385–447; it reads AAEVGAVVEV…TPATLIGTPA (63 aa).

The protein belongs to the methylthiotransferase family. MiaB subfamily. Monomer. Requires [4Fe-4S] cluster as cofactor.

It localises to the cytoplasm. The catalysed reaction is N(6)-dimethylallyladenosine(37) in tRNA + (sulfur carrier)-SH + AH2 + 2 S-adenosyl-L-methionine = 2-methylsulfanyl-N(6)-dimethylallyladenosine(37) in tRNA + (sulfur carrier)-H + 5'-deoxyadenosine + L-methionine + A + S-adenosyl-L-homocysteine + 2 H(+). Its function is as follows. Catalyzes the methylthiolation of N6-(dimethylallyl)adenosine (i(6)A), leading to the formation of 2-methylthio-N6-(dimethylallyl)adenosine (ms(2)i(6)A) at position 37 in tRNAs that read codons beginning with uridine. The sequence is that of tRNA-2-methylthio-N(6)-dimethylallyladenosine synthase from Chlorobium phaeobacteroides (strain BS1).